The chain runs to 431 residues: Histidinol dehydrogenase (431 aa).

3 residues coordinate NAD(+): Tyr-127, Gln-189, and Asn-212. 3 residues coordinate substrate: Ser-237, Gln-259, and His-262. Gln-259 and His-262 together coordinate Zn(2+). Residues Glu-326 and His-327 each act as proton acceptor in the active site. Substrate is bound by residues His-327, Asp-360, Glu-414, and His-419. Asp-360 provides a ligand contact to Zn(2+). Zn(2+) is bound at residue His-419.

It belongs to the histidinol dehydrogenase family. The cofactor is Zn(2+).

The enzyme catalyses L-histidinol + 2 NAD(+) + H2O = L-histidine + 2 NADH + 3 H(+). The protein operates within amino-acid biosynthesis; L-histidine biosynthesis; L-histidine from 5-phospho-alpha-D-ribose 1-diphosphate: step 9/9. Its function is as follows. Catalyzes the sequential NAD-dependent oxidations of L-histidinol to L-histidinaldehyde and then to L-histidine. The sequence is that of Histidinol dehydrogenase from Xanthomonas campestris pv. campestris (strain 8004).